Consider the following 545-residue polypeptide: MLTQLKTYPKLLKHYEEIKEVHMHDWFSKDKERASRYFVQFESLSLDYSKNRLNDTTLKLLFELADDCSLKEKIEAMFKGEKINTTEKRAVLHTALRSLNDAEILLDNMEVLKSVRSVLKRMRAFSDSVRSGKRLGYTNQVITDIVNIGIGGSDLGALMVCTALKRYGHPRLKMHFVSNVDGTQILDVLEKINPASTLFIVASKTFSTQETLTNALTARKWFVERSGDEKHIAKHFVAVSTNKEAVQQFGIDEHNMFEFWDFVGGRYSLWSAIGLSIMIYLGKKNFNALLKGAYLMDEHFRNAPFESNLPVLMGLIGVWYINFFQSKSHLIAPYDQYLRHFPKFIQQLDMESNGKRISKKGETIPYDTCPVVWGDMGINAQHAFFQLLHQGTHLIPIDFIASLDKKPNAKGHHEILFSNVLAQAQAFMKGKSYEEALGELLFKGLDKDEAKDLAHHRVFFGNRPSNILLLEKISPSNIGALVALYEHKVFVQGVIWDINSFDQWGVELGKELAVPILQELEGHKSNAYFDSSTKHLIELYKNYNQ.

The active-site Proton donor is E351. Catalysis depends on residues H382 and K510.

Belongs to the GPI family.

The protein localises to the cytoplasm. The catalysed reaction is alpha-D-glucose 6-phosphate = beta-D-fructose 6-phosphate. It functions in the pathway carbohydrate biosynthesis; gluconeogenesis. It participates in carbohydrate degradation; glycolysis; D-glyceraldehyde 3-phosphate and glycerone phosphate from D-glucose: step 2/4. Catalyzes the reversible isomerization of glucose-6-phosphate to fructose-6-phosphate. This Helicobacter pylori (strain G27) protein is Glucose-6-phosphate isomerase.